We begin with the raw amino-acid sequence, 315 residues long: Diacylglycerol kinase (315 aa).

The 132-residue stretch at 1–132 (MRKRARIIYN…VDIGKMNNRY (132 aa)) folds into the DAGKc domain. ATP is bound by residues 10–14 (NPTSG), Thr-41, 67–73 (GDGTLNE), and Thr-94. The Mg(2+) site is built by Lys-213, Asp-216, and Tyr-218. Residue Glu-273 is the Proton acceptor of the active site.

This sequence belongs to the diacylglycerol/lipid kinase family. As to quaternary structure, homodimer. It depends on Mg(2+) as a cofactor.

The catalysed reaction is a 1,2-diacyl-sn-glycerol + ATP = a 1,2-diacyl-sn-glycero-3-phosphate + ADP + H(+). Catalyzes the phosphorylation of diacylglycerol (DAG) into phosphatidic acid. Is a key enzyme involved in the production of lipoteichoic acid by reintroducing DAG formed from the breakdown of membrane phospholipids into the phosphatidylglycerol biosynthetic pathway. This chain is Diacylglycerol kinase (dagK), found in Staphylococcus aureus (strain USA300 / TCH1516).